The primary structure comprises 440 residues: Protein disulfide-isomerase A6 (440 aa).

An N-terminal signal peptide occupies residues 1-19 (MARLVLGLVSCTFFLAVSG). Thioredoxin domains lie at 20 to 133 (LYSS…ALRQ) and 151 to 287 (QGRG…EDIA). The cysteines at positions 55 and 58 are disulfide-linked. Residues S129, S156, and S158 each carry the phosphoserine modification. The segment at 139–161 (LGGRSGGYSSGKQGRGDSSSKKD) is disordered. Positions 152 to 161 (GRGDSSSKKD) are enriched in basic and acidic residues. A disulfide bond links C190 and C193. Residues 399–440 (GGGSFPTITPREPWDGKDGELPVEDDIDLSDVELDDLEKDEL) are disordered. Positions 419 to 440 (LPVEDDIDLSDVELDDLEKDEL) are enriched in acidic residues. S428 carries the post-translational modification Phosphoserine. The short motif at 437 to 440 (KDEL) is the Prevents secretion from ER element.

This sequence belongs to the protein disulfide isomerase family. Part of a large chaperone multiprotein complex comprising DNAJB11, HSP90B1, HSPA5, HYOU, PDIA2, PDIA4, PDIA6, PPIB, SDF2L1, UGGT1 and very small amounts of ERP29, but not, or at very low levels, CALR nor CANX. Interacts with MICA on the surface of tumor cells, leading to MICA disulfide bond reduction which is required for its release from tumor cells. Interacts with ITGB3 following platelet stimulation. Interacts with ERN1; the interaction is direct. Interacts with EIF2AK3.

The protein localises to the endoplasmic reticulum lumen. It is found in the cell membrane. Its subcellular location is the melanosome. The catalysed reaction is Catalyzes the rearrangement of -S-S- bonds in proteins.. In terms of biological role, may function as a chaperone that inhibits aggregation of misfolded proteins. Negatively regulates the unfolded protein response (UPR) through binding to UPR sensors such as ERN1, which in turn inactivates ERN1 signaling. May also regulate the UPR via the EIF2AK3 UPR sensor. Plays a role in platelet aggregation and activation by agonists such as convulxin, collagen and thrombin. The protein is Protein disulfide-isomerase A6 (Pdia6) of Mus musculus (Mouse).